The primary structure comprises 312 residues: Ribosomal protein L11 methyltransferase (312 aa).

S-adenosyl-L-methionine-binding residues include threonine 160, glycine 181, aspartate 203, and asparagine 246.

It belongs to the methyltransferase superfamily. PrmA family.

Its subcellular location is the cytoplasm. The enzyme catalyses L-lysyl-[protein] + 3 S-adenosyl-L-methionine = N(6),N(6),N(6)-trimethyl-L-lysyl-[protein] + 3 S-adenosyl-L-homocysteine + 3 H(+). Functionally, methylates ribosomal protein L11. The sequence is that of Ribosomal protein L11 methyltransferase from Staphylococcus carnosus (strain TM300).